A 511-amino-acid chain; its full sequence is MSLRHEQLPQDVEQLSRMVLDLRAEVAYLKRLIHGARSEVLSTIDPTQTSLDLGDLSTVPVAANDDQPDGSRQSVRGRQSAARNIGFLPKHLPRYDVIIEPESRACACCSGALHRIGETTSEALDIVPAILRVKRTIRPRYACRACENGVMQAPAPARFMDGGMATTALAAHIVVSKFAWHLPLYRQAQIFAGYGITLDRGTLGIWGTRVAWWLKPLYDRLLAFIRSQPRVFSDETRLPRLDPGRKRTKVCQLWAQAVDDRPWKGPAPPAVGYIFSESRSAREAERQLASFNGVLQVDGYTAYKTLARHRGKSNSSPLRLAFCLAHARRKFVDVVKLTGSPEALEIVSILAEVYQIEREIRGQSAEDRQNARQLRSAPVMRQLKARLLDLKNDISTQSALAKAIKYTLAHWTGLNAFLDDGTIEVDSNIVERSMKSVALTRKNSMFVGNVQGGETFAVLASLINSAKLSGLDPYAWLADVLERIVSGSTTINQLETLLPWNWKADQVGQAA.

A disordered region spans residues 59 to 79 (VPVAANDDQPDGSRQSVRGRQ).

The protein belongs to the transposase 25 family.

This is an uncharacterized protein from Sinorhizobium fredii (strain NBRC 101917 / NGR234).